Reading from the N-terminus, the 469-residue chain is E3 ubiquitin-protein ligase pellino homolog 3 (469 aa).

The disordered stretch occupies residues M1–E39. S11 is subject to Phosphoserine.

This sequence belongs to the pellino family. As to quaternary structure, interacts with TRAF6, MAP3K14 and MAP3K7. Post-translationally, phosphorylated by IRAK1 enhancing its E3 ligase activity. As to expression, highly expressed in brain, heart and testis, and at lower level in kidney, liver, lung, placenta, small intestine, spleen and stomach. Isoform 1 is not expressed in lung.

It carries out the reaction S-ubiquitinyl-[E2 ubiquitin-conjugating enzyme]-L-cysteine + [acceptor protein]-L-lysine = [E2 ubiquitin-conjugating enzyme]-L-cysteine + N(6)-ubiquitinyl-[acceptor protein]-L-lysine.. Its pathway is protein modification; protein ubiquitination. Its function is as follows. E3 ubiquitin ligase catalyzing the covalent attachment of ubiquitin moieties onto substrate proteins. Involved in the TLR and IL-1 signaling pathways via interaction with the complex containing IRAK kinases and TRAF6. Mediates 'Lys-63'-linked polyubiquitination of IRAK1. Can activate AP1/JUN and ELK1. Acts as a regulator of innate immunity by mediating 'Lys-63'-linked polyubiquitination of RIPK2 downstream of NOD1 and NOD2, thereby transforming RIPK2 into a scaffolding protein for downstream effectors, ultimately leading to activation of the NF-kappa-B and MAP kinases signaling. Catalyzes 'Lys-63'-linked polyubiquitination of RIPK2 in parallel of XIAP. The protein is E3 ubiquitin-protein ligase pellino homolog 3 of Homo sapiens (Human).